The following is a 1514-amino-acid chain: Neurexin-1 (1514 aa).

A signal peptide spans 1–30 (MGTALVQRGGCCLLCLSLLLLGCWAELGSG). The Laminin G-like 1 domain occupies 31–217 (LEFPGAEGQW…PPNSGGGSPC (187 aa)). The Extracellular segment spans residues 31–1438 (LEFPGAEGQW…EVIRESSSTT (1408 aa)). N-linked (GlcNAc...) asparagine glycosylation is found at asparagine 125 and asparagine 190. The tract at residues 197–221 (VDGGEVKLDDEPPNSGGGSPCEAGE) is disordered. An EGF-like 1 domain is found at 219-256 (AGEEGEGGVCLNGGVCSVVDDQAVCDCSRTGFRGKDCS). Cystine bridges form between cysteine 228–cysteine 243 and cysteine 245–cysteine 255. Laminin G-like domains lie at 283 to 480 (IATF…AFKC) and 487 to 679 (DPIT…KPSC). Ca(2+) contacts are provided by aspartate 329, leucine 346, and methionine 414. 5 disulfide bridges follow: cysteine 444–cysteine 480, cysteine 650–cysteine 679, cysteine 687–cysteine 698, cysteine 692–cysteine 707, and cysteine 709–cysteine 719. Positions 683–720 (TAKPCLSNPCKNNGMCRDGWNRYVCDCSGTGYLGRSCE) constitute an EGF-like 2 domain. Laminin G-like domains follow at residues 725–898 (VLSY…IDYC) and 912–1087 (DPVT…ERGC). Ca(2+) contacts are provided by aspartate 772 and leucine 789. A glycan (N-linked (GlcNAc...) asparagine) is linked at asparagine 797. Arginine 848 contributes to the Ca(2+) binding site. Cystine bridges form between cysteine 890-cysteine 898, cysteine 1059-cysteine 1087, cysteine 1094-cysteine 1105, cysteine 1099-cysteine 1114, and cysteine 1116-cysteine 1126. The EGF-like 3 domain occupies 1090 to 1127 (PSTTCQEDSCSNQGVCLQQWDGFSCDCSMTSFSGPLCN). One can recognise a Laminin G-like 6 domain in the interval 1133–1331 (YIFSKGGGQI…DANIAIVGNV (199 aa)). The Ca(2+) site is built by aspartate 1183 and valine 1200. N-linked (GlcNAc...) asparagine glycosylation is present at asparagine 1230. Residues isoleucine 1282 and asparagine 1284 each coordinate Ca(2+). Residue serine 1392 is glycosylated (O-linked (Xyl...) (heparan sulfate) serine). Residues 1396–1427 (PSDDEDIDPCEPSSGGLANPTRVGGREPYPGS) are disordered. The helical transmembrane segment at 1439 to 1459 (GMVVGIVAAAALCILILLYAM) threads the bilayer. Residues 1460–1514 (YKYRNRDEGSYHVDESRNYISNSAQSNGAVVKEKQPSSAKSANKNKKNKDKEYYV) lie on the Cytoplasmic side of the membrane. The segment at 1481–1507 (NSAQSNGAVVKEKQPSSAKSANKNKKN) is interaction with CASK. Positions 1481 to 1514 (NSAQSNGAVVKEKQPSSAKSANKNKKNKDKEYYV) are disordered.

Belongs to the neurexin family. In terms of assembly, interacts (via laminin G-like domain 2 and/or laminin G-like domain 6) with NLGN1 forming a heterotetramer, where one NLGN1 dimer interacts with one NRXN1 dimer. Also interacts (via laminin G-like domain 2 and/or laminin G-like domain 6) with NLGN2, NLGN3 and NLGN4L; interactions with NLGN1, NLGN2, NLGN3 and NLGN4L are calcium-dependent. Interacts (via cytoplasmic C-terminal region) with CASK (via the PDZ, SH3 and guanylate kinase-like domains). Interacts (via cytoplasmic C-terminus) with CASKIN1 and APBA1. Interacts (via laminin G-like domain 2) with NXPH1 and NXPH3. Alpha-type isoforms (neurexin-1-alpha) interact (via laminin G-like domain 2 and/or laminin G-like domain 6) with DAG1 (via alpha-dystroglycan chain). Interacts with LRRTM1, LRRTM2, LRRTM3 and LRRTM4. Interacts with SYT13 and SYTL1. Interacts with CBLN1, CBLN2 and, less avidly, with CBLN4. Interacts with CLSTN3. Post-translationally, O-glycosylated; contains heparan sulfate. Heparan sulfate attachment is required for synapse development by mediating interactions with neuroligins and LRRTM2.

It is found in the presynaptic cell membrane. Its function is as follows. Cell surface protein involved in cell-cell-interactions, exocytosis of secretory granules and regulation of signal transmission. Function is isoform-specific. Alpha-type isoforms have a long N-terminus with six laminin G-like domains and play an important role in synaptic signal transmission. Alpha-type isoforms play a role in the regulation of calcium channel activity and Ca(2+)-triggered neurotransmitter release at synapses and at neuromuscular junctions. They play an important role in Ca(2+)-triggered exocytosis of secretory granules in pituitary gland. They may affect their functions at synapses and in endocrine cells via their interactions with proteins from the exocytotic machinery. Likewise, alpha-type isoforms play a role in regulating the activity of postsynaptic NMDA receptors, a subtype of glutamate-gated ion channels. Both alpha-type and beta-type isoforms may play a role in the formation or maintenance of synaptic junctions via their interactions (via the extracellular domains) with neuroligin family members, CBLN1 or CBLN2. In vitro, triggers the de novo formation of presynaptic structures. May be involved in specification of excitatory synapses. Alpha-type isoforms were first identified as receptors for alpha-latrotoxin from spider venom. This Mus musculus (Mouse) protein is Neurexin-1 (Nrxn1).